A 1017-amino-acid chain; its full sequence is GPI ethanolamine phosphate transferase 3 (1017 aa).

A helical membrane pass occupies residues 34-54 (FYIILLVFIAILQFISIAFFT). Asn66, Asn71, Asn100, Asn182, and Asn203 each carry an N-linked (GlcNAc...) asparagine glycan. Residues 347–367 (VSSLALLMGQPIPFNNLGWPI) traverse the membrane as a helical segment. N-linked (GlcNAc...) asparagine glycosylation occurs at Asn411. 6 helical membrane passes run 457–477 (LLATSLVLLISITKLIPSIVV), 484–504 (FVPGIIIMVLVTNLCFHGIFY), 515–535 (FWGTLLATAIGIIIGCYITIF), 558–578 (IAVMFMIIHALLFTSNSFTIW), 582–602 (IVAFLLSTFGMLTLYEFVFLP), and 644–664 (LGGYHSAVLIIFTRLASMITI). N-linked (GlcNAc...) asparagine glycans are attached at residues Asn681 and Asn682. Residues 685 to 705 (WWVLGLCFLMIFILPACITGY) traverse the membrane as a helical segment. Asn707 carries N-linked (GlcNAc...) asparagine glycosylation. A helical membrane pass occupies residues 715 to 735 (AAPIWINVFLKGILGLNFVYW). Asn742 carries an N-linked (GlcNAc...) asparagine glycan. Helical transmembrane passes span 765–785 (IIAGFSLIASNVGWLMGPLCI), 806–826 (NIYGSEFFLLVINVLISILLF), 829–849 (PLAQLSYFLMCNQLLSILEII), 903–923 (IAIILNTFGPHILVSLSVALL), 947–967 (GILLTYNTILCLSSFIWVTHF), and 981–1001 (FIFASLSLIVTQLVVTFGTIA).

The protein belongs to the PIGG/PIGN/PIGO family. PIGO subfamily. Glycosylated.

It localises to the endoplasmic reticulum membrane. The protein operates within glycolipid biosynthesis; glycosylphosphatidylinositol-anchor biosynthesis. In terms of biological role, involved in glycosylphosphatidylinositol-anchor biosynthesis. Transfers ethanolamine phosphate to the GPI third mannose which links the GPI-anchor to the C-terminus of the proteins by an amide bond. Involved in cell wall biosynthesis. This Saccharomyces cerevisiae (strain ATCC 204508 / S288c) (Baker's yeast) protein is GPI ethanolamine phosphate transferase 3 (GPI13).